The following is a 314-amino-acid chain: DNA-directed RNA polymerase subunit alpha (314 aa).

Positions 1–228 (MIEIEKPKIE…EHLNIFVGLT (228 aa)) are alpha N-terminal domain (alpha-NTD). Positions 245-314 (KEKVLEMTIE…ELGLGLRKDD (70 aa)) are alpha C-terminal domain (alpha-CTD).

Belongs to the RNA polymerase alpha chain family. In terms of assembly, homodimer. The RNAP catalytic core consists of 2 alpha, 1 beta, 1 beta' and 1 omega subunit. When a sigma factor is associated with the core the holoenzyme is formed, which can initiate transcription.

It carries out the reaction RNA(n) + a ribonucleoside 5'-triphosphate = RNA(n+1) + diphosphate. DNA-dependent RNA polymerase catalyzes the transcription of DNA into RNA using the four ribonucleoside triphosphates as substrates. This Bacillus thuringiensis (strain Al Hakam) protein is DNA-directed RNA polymerase subunit alpha.